A 258-amino-acid polypeptide reads, in one-letter code: Ribonuclease HII (258 aa).

Positions 1–20 (MRVAPSGGPPHHHAMIRATP) are disordered. Positions 10–20 (PHHHAMIRATP) are enriched in basic residues. In terms of domain architecture, RNase H type-2 spans 48-236 (WPVAGCDEVG…VVAARERHRA (189 aa)). A divalent metal cation is bound by residues Asp-54, Glu-55, and Asp-145.

It belongs to the RNase HII family. Requires Mn(2+) as cofactor. The cofactor is Mg(2+).

The protein resides in the cytoplasm. It carries out the reaction Endonucleolytic cleavage to 5'-phosphomonoester.. Functionally, endonuclease that specifically degrades the RNA of RNA-DNA hybrids. This chain is Ribonuclease HII, found in Nitrobacter winogradskyi (strain ATCC 25391 / DSM 10237 / CIP 104748 / NCIMB 11846 / Nb-255).